Reading from the N-terminus, the 66-residue chain is 14-3-3-like protein 2 (66 aa).

The protein belongs to the 14-3-3 family.

In Pseudotsuga menziesii (Douglas-fir), this protein is 14-3-3-like protein 2.